The following is a 517-amino-acid chain: Gamma-1-syntrophin (517 aa).

The PDZ domain occupies 57 to 140 (TVTIRRQTVG…EVTLTVSFLK (84 aa)). The region spanning 283-390 (QIVYMGWCEA…WERAFQTATF (108 aa)) is the PH domain.

It belongs to the syntrophin family. As to quaternary structure, isoform 1, but not isoform 2, interacts with the dystrophin protein DMD and related proteins DTNA and DTNB. Interacts with DGKZ. In terms of tissue distribution, brain specific. In CNS, it is expressed in the perikaryon and proximal portion of the neuronal processes. Strong expression in the hippocampus, neuron-rich dendate granule cells, and pyramidal cell layers. Highly expressed in neurons of the cerebral cortex. Also expressed in the cerebellar cortex, deep cerebellar nuclei, thalamus, and basal ganglia. No expression in muscle cells.

It localises to the cytoplasm. It is found in the cytoskeleton. Its subcellular location is the nucleus. Its function is as follows. Adapter protein that binds to and probably organizes the subcellular localization of a variety of proteins. May link various receptors to the actin cytoskeleton and the dystrophin glycoprotein complex. May participate in regulating the subcellular location of diacylglycerol kinase-zeta to ensure that diacylglycerol is rapidly inactivated following receptor activation. This chain is Gamma-1-syntrophin (SNTG1), found in Homo sapiens (Human).